Consider the following 855-residue polypeptide: Alanine--tRNA ligase (855 aa).

Residues histidine 555, histidine 559, cysteine 657, and histidine 661 each contribute to the Zn(2+) site.

It belongs to the class-II aminoacyl-tRNA synthetase family. Zn(2+) is required as a cofactor.

It localises to the cytoplasm. It catalyses the reaction tRNA(Ala) + L-alanine + ATP = L-alanyl-tRNA(Ala) + AMP + diphosphate. In terms of biological role, catalyzes the attachment of alanine to tRNA(Ala) in a two-step reaction: alanine is first activated by ATP to form Ala-AMP and then transferred to the acceptor end of tRNA(Ala). Also edits incorrectly charged Ser-tRNA(Ala) and Gly-tRNA(Ala) via its editing domain. The chain is Alanine--tRNA ligase from Wolinella succinogenes (strain ATCC 29543 / DSM 1740 / CCUG 13145 / JCM 31913 / LMG 7466 / NCTC 11488 / FDC 602W) (Vibrio succinogenes).